The primary structure comprises 92 residues: Small ribosomal subunit protein uS19c (92 aa).

Belongs to the universal ribosomal protein uS19 family.

The protein localises to the plastid. Its subcellular location is the chloroplast. Protein S19 forms a complex with S13 that binds strongly to the 16S ribosomal RNA. This Lemna minor (Common duckweed) protein is Small ribosomal subunit protein uS19c.